A 219-amino-acid polypeptide reads, in one-letter code: uncharacterized protein (219 aa).

The Cytoplasmic portion of the chain corresponds to 1-15 (MLKLTTTSVTFHVLR). Residues 16–36 (YFQLGLSVTNLLLASFAIITN) form a helical membrane-spanning segment. The Vacuolar segment spans residues 37 to 41 (YKVDR). The chain crosses the membrane as a helical span at residues 42–62 (ILRLSLAVSIISSVYFGIVRF). A topological domain (cytoplasmic) is located at residue L63. The chain crosses the membrane as a helical span at residues 64–84 (PVLLIFVMEIVQTVLWFTAFV). Residues 85 to 116 (TLASKFGSMSCSSMPRGINFDYSGSCKIAKID) lie on the Vacuolar side of the membrane. The chain crosses the membrane as a helical span at residues 117-137 (ILPEAVLFILFLATTYASYIT). The Cytoplasmic segment spans residues 138-219 (VLSQAKENGS…VIDGSIEHSS (82 aa)). Residues 176 to 219 (PLLDLEVQEDARTETESIEDSTDSEDNANIEQEKVIDGSIEHSS) are disordered. The span at 191–203 (ESIEDSTDSEDNA) shows a compositional bias: acidic residues. Positions 206–219 (EQEKVIDGSIEHSS) are enriched in basic and acidic residues.

It localises to the vacuole membrane. This is an uncharacterized protein from Saccharomyces cerevisiae (strain ATCC 204508 / S288c) (Baker's yeast).